A 361-amino-acid polypeptide reads, in one-letter code: Aminomethyltransferase (361 aa).

Belongs to the GcvT family. As to quaternary structure, the glycine cleavage system is composed of four proteins: P, T, L and H.

The catalysed reaction is N(6)-[(R)-S(8)-aminomethyldihydrolipoyl]-L-lysyl-[protein] + (6S)-5,6,7,8-tetrahydrofolate = N(6)-[(R)-dihydrolipoyl]-L-lysyl-[protein] + (6R)-5,10-methylene-5,6,7,8-tetrahydrofolate + NH4(+). In terms of biological role, the glycine cleavage system catalyzes the degradation of glycine. The sequence is that of Aminomethyltransferase from Phocaeicola vulgatus (strain ATCC 8482 / DSM 1447 / JCM 5826 / CCUG 4940 / NBRC 14291 / NCTC 11154) (Bacteroides vulgatus).